Here is a 317-residue protein sequence, read N- to C-terminus: Transcriptional regulator LsrR (317 aa).

The segment at residues 33–56 (QSEISDRLGLTRLKVSRLLEKGHQ) is a DNA-binding region (H-T-H motif).

Belongs to the SorC transcriptional regulatory family.

The protein localises to the cytoplasm. Its activity is regulated as follows. Inactivated by phosphorylated autoinducer-2 (phospho-AI-2). Phospho-AI-2 acts by binding to LsrR, which is then unable to bind to the promoter regions, allowing the transcription of the target genes. Transcriptional regulator that represses the expression of the lsr operon in the absence of the quorum-sensing signaling molecule autoinducer 2 (AI-2). It also represses the expression of the lsrRK operon. Acts by binding directly to the lsrA and lsrR promoter regions. In the presence of phosphorylated autoinducer-2 (phospho-AI-2), LsrR is inactivated, leading to the transcription of the genes. The chain is Transcriptional regulator LsrR (lsrR) from Escherichia coli O139:H28 (strain E24377A / ETEC).